The primary structure comprises 274 residues: Glutamate racemase (274 aa).

Substrate contacts are provided by residues 10 to 11 (DS) and 42 to 43 (YG). Cysteine 73 functions as the Proton donor/acceptor in the catalytic mechanism. Residue 74–75 (NT) coordinates substrate. Residue cysteine 184 is the Proton donor/acceptor of the active site. 185-186 (TH) serves as a coordination point for substrate.

The protein belongs to the aspartate/glutamate racemases family.

It carries out the reaction L-glutamate = D-glutamate. Its pathway is cell wall biogenesis; peptidoglycan biosynthesis. Functionally, provides the (R)-glutamate required for cell wall biosynthesis. The chain is Glutamate racemase from Latilactobacillus sakei subsp. sakei (strain 23K) (Lactobacillus sakei subsp. sakei).